A 514-amino-acid polypeptide reads, in one-letter code: Threonine synthase (514 aa).

The residue at position 124 (Lys-124) is an N6-(pyridoxal phosphate)lysine. Pyridoxal 5'-phosphate contacts are provided by Gly-277, Asn-278, Phe-279, Asp-281, and Thr-449. Ser-467 carries the post-translational modification Phosphoserine.

It belongs to the threonine synthase family. It depends on pyridoxal 5'-phosphate as a cofactor.

It carries out the reaction O-phospho-L-homoserine + H2O = L-threonine + phosphate. It participates in amino-acid biosynthesis; L-threonine biosynthesis; L-threonine from L-aspartate: step 5/5. Functionally, catalyzes the gamma-elimination of phosphate from L-phosphohomoserine and the beta-addition of water to produce L-threonine. The chain is Threonine synthase (THR4) from Saccharomyces cerevisiae (strain ATCC 204508 / S288c) (Baker's yeast).